Reading from the N-terminus, the 442-residue chain is Protein translocase subunit SecF (442 aa).

A disordered region spans residues methionine 1–alanine 39. 6 helical membrane passes run tryptophan 67–phenylalanine 87, isoleucine 187–threonine 207, alanine 218–phenylalanine 238, alanine 243–phenylalanine 263, leucine 301–glycine 321, and leucine 331–threonine 351. Residues valine 366–arginine 442 are disordered. The segment covering glutamine 402–arginine 432 has biased composition (low complexity). The segment covering proline 433–arginine 442 has biased composition (basic residues).

It belongs to the SecD/SecF family. SecF subfamily. Forms a complex with SecD. Part of the essential Sec protein translocation apparatus which comprises SecA, SecYEG and auxiliary proteins SecDF. Other proteins may also be involved.

Its subcellular location is the cell membrane. Its function is as follows. Part of the Sec protein translocase complex. Interacts with the SecYEG preprotein conducting channel. SecDF uses the proton motive force (PMF) to complete protein translocation after the ATP-dependent function of SecA. The polypeptide is Protein translocase subunit SecF (Mycobacterium tuberculosis (strain CDC 1551 / Oshkosh)).